The primary structure comprises 316 residues: Bifunctional peptidase and (3S)-lysyl hydroxylase Jmjd7 (316 aa).

The JmjC domain occupies 128–307 (VQKQCSNLPT…LKYSYFQLMD (180 aa)). Residues His-178, Asp-180, and His-277 each coordinate Fe cation.

As to quaternary structure, homodimer; disulfide-linked. Interacts with DRG1 and DRG2. Requires Fe(2+) as cofactor.

Its subcellular location is the nucleus. The protein resides in the cytoplasm. The catalysed reaction is L-lysyl-[protein] + 2-oxoglutarate + O2 = (3S)-3-hydroxy-L-lysyl-[protein] + succinate + CO2. Functionally, bifunctional enzyme that acts both as an endopeptidase and 2-oxoglutarate-dependent monooxygenase. Endopeptidase that cleaves histones N-terminal tails at the carboxyl side of methylated arginine or lysine residues, to generate 'tailless nucleosomes', which may trigger transcription elongation. Preferentially recognizes and cleaves monomethylated and dimethylated arginine residues of histones H2, H3 and H4. After initial cleavage, continues to digest histones tails via its aminopeptidase activity. Additionally, may play a role in protein biosynthesis by modifying the translation machinery. Acts as a Fe(2+) and 2-oxoglutarate-dependent monooxygenase, catalyzing (S)-stereospecific hydroxylation at C-3 of 'Lys-22' of DRG1 and 'Lys-21' of DRG2 translation factors (TRAFAC), promoting their interaction with ribonucleic acids (RNA). The chain is Bifunctional peptidase and (3S)-lysyl hydroxylase Jmjd7 from Mus musculus (Mouse).